The following is a 423-amino-acid chain: Putative competence-damage inducible protein (423 aa).

This sequence belongs to the CinA family.

In Streptococcus pyogenes serotype M12 (strain MGAS2096), this protein is Putative competence-damage inducible protein.